Reading from the N-terminus, the 126-residue chain is Histone H2B type 1-K (126 aa).

The segment covering 1 to 12 (MPEPAKSAPAPK) has biased composition (low complexity). The segment at 1 to 36 (MPEPAKSAPAPKKGSKKAVTKAQKKDGKKRKRSRKE) is disordered. N-acetylproline is present on Pro-2. Glu-3 bears the ADP-ribosyl glutamic acid mark. Lys-6 bears the N6-(2-hydroxyisobutyryl)lysine; alternate mark. The residue at position 6 (Lys-6) is an N6-(beta-hydroxybutyryl)lysine; alternate. Residue Lys-6 is modified to N6-acetyllysine; alternate. Lys-6 carries the post-translational modification N6-butyryllysine; alternate. N6-crotonyllysine; alternate is present on Lys-6. Lys-6 is subject to N6-lactoyllysine; alternate. Lys-6 participates in a covalent cross-link: Glycyl lysine isopeptide (Lys-Gly) (interchain with G-Cter in SUMO2); alternate. At Ser-7 the chain carries ADP-ribosylserine. Position 12 is an N6-(beta-hydroxybutyryl)lysine; alternate (Lys-12). An N6-acetyllysine; alternate mark is found at Lys-12 and Lys-13. N6-crotonyllysine; alternate is present on residues Lys-12 and Lys-13. The residue at position 12 (Lys-12) is an N6-lactoyllysine; alternate. The residue at position 13 (Lys-13) is an N6-(2-hydroxyisobutyryl)lysine; alternate. At Ser-15 the chain carries Phosphoserine; by STK4/MST1. N6-acetyllysine; alternate is present on residues Lys-16, Lys-17, Lys-21, and Lys-24. N6-crotonyllysine; alternate occurs at positions 16, 17, 21, and 24. N6-lactoyllysine; alternate is present on residues Lys-16, Lys-17, Lys-21, and Lys-24. Residues Lys-17 and Lys-21 each carry the N6-(beta-hydroxybutyryl)lysine; alternate modification. Residue Lys-17 is modified to N6-glutaryllysine; alternate. Lys-21 and Lys-24 each carry N6-(2-hydroxyisobutyryl)lysine; alternate. The residue at position 21 (Lys-21) is an N6-butyryllysine; alternate. A Glycyl lysine isopeptide (Lys-Gly) (interchain with G-Cter in SUMO2); alternate cross-link involves residue Lys-21. Residue Lys-25 is modified to N6-(2-hydroxyisobutyryl)lysine. An N6-(2-hydroxyisobutyryl)lysine; alternate modification is found at Lys-35. Lys-35 is subject to N6-(beta-hydroxybutyryl)lysine; alternate. Lys-35 carries the N6-crotonyllysine; alternate modification. Position 35 is an N6-glutaryllysine; alternate (Lys-35). Position 35 is an N6-succinyllysine; alternate (Lys-35). Lys-35 participates in a covalent cross-link: Glycyl lysine isopeptide (Lys-Gly) (interchain with G-Cter in ubiquitin); alternate. Residue Glu-36 is modified to PolyADP-ribosyl glutamic acid. Position 37 is a phosphoserine; by AMPK (Ser-37). An N6-(2-hydroxyisobutyryl)lysine; alternate mark is found at Lys-44, Lys-47, and Lys-58. Lys-44 carries the N6-lactoyllysine; alternate modification. 2 positions are modified to N6-glutaryllysine; alternate: Lys-44 and Lys-47. Lys-47 bears the N6-methyllysine; alternate mark. The residue at position 58 (Lys-58) is an N6,N6-dimethyllysine; alternate. Arg-80 is modified (dimethylated arginine). Lys-86 is subject to N6-(2-hydroxyisobutyryl)lysine; alternate. The residue at position 86 (Lys-86) is an N6-(beta-hydroxybutyryl)lysine; alternate. Lys-86 carries the post-translational modification N6-acetyllysine; alternate. Residue Lys-86 is modified to N6-lactoyllysine; alternate. Position 86 is an N6,N6,N6-trimethyllysine; alternate (Lys-86). Omega-N-methylarginine occurs at positions 87 and 93. Lys-109 bears the N6-(2-hydroxyisobutyryl)lysine; alternate mark. Lys-109 carries the post-translational modification N6-lactoyllysine; alternate. Lys-109 carries the N6-glutaryllysine; alternate modification. At Lys-109 the chain carries N6-methyllysine; alternate. Ser-113 carries an O-linked (GlcNAc) serine glycan. The residue at position 116 (Thr-116) is a Phosphothreonine. Lys-117 and Lys-121 each carry N6-(2-hydroxyisobutyryl)lysine; alternate. N6-(beta-hydroxybutyryl)lysine; alternate is present on residues Lys-117 and Lys-121. Lys-117 and Lys-121 each carry N6-lactoyllysine; alternate. N6-glutaryllysine; alternate occurs at positions 117 and 121. 2 positions are modified to N6-succinyllysine; alternate: Lys-117 and Lys-121. Lys-117 bears the N6-malonyllysine; alternate mark. At Lys-117 the chain carries N6-methylated lysine; alternate. Lys-121 participates in a covalent cross-link: Glycyl lysine isopeptide (Lys-Gly) (interchain with G-Cter in ubiquitin); alternate.

Belongs to the histone H2B family. In terms of assembly, the nucleosome is a histone octamer containing two molecules each of H2A, H2B, H3 and H4 assembled in one H3-H4 heterotetramer and two H2A-H2B heterodimers. The octamer wraps approximately 147 bp of DNA. Post-translationally, monoubiquitination at Lys-35 (H2BK34Ub) by the MSL1/MSL2 dimer is required for histone H3 'Lys-4' (H3K4me) and 'Lys-79' (H3K79me) methylation and transcription activation at specific gene loci, such as HOXA9 and MEIS1 loci. Similarly, monoubiquitination at Lys-121 (H2BK120Ub) by the RNF20/40 complex gives a specific tag for epigenetic transcriptional activation and is also prerequisite for histone H3 'Lys-4' and 'Lys-79' methylation. It also functions cooperatively with the FACT dimer to stimulate elongation by RNA polymerase II. H2BK120Ub also acts as a regulator of mRNA splicing: deubiquitination by USP49 is required for efficient cotranscriptional splicing of a large set of exons. In terms of processing, phosphorylation at Ser-37 (H2BS36ph) by AMPK in response to stress promotes transcription. Phosphorylated on Ser-15 (H2BS14ph) by STK4/MST1 during apoptosis; which facilitates apoptotic chromatin condensation. Also phosphorylated on Ser-15 in response to DNA double strand breaks (DSBs), and in correlation with somatic hypermutation and immunoglobulin class-switch recombination. GlcNAcylation at Ser-113 promotes monoubiquitination of Lys-121. It fluctuates in response to extracellular glucose, and associates with transcribed genes. Post-translationally, ADP-ribosylated by PARP1 or PARP2 on Ser-7 (H2BS6ADPr) in response to DNA damage. H2BS6ADPr promotes recruitment of CHD1L. Mono-ADP-ribosylated on Glu-3 (H2BE2ADPr) by PARP3 in response to single-strand breaks. Poly ADP-ribosylation on Glu-36 (H2BE35ADPr) by PARP1 regulates adipogenesis: it inhibits phosphorylation at Ser-37 (H2BS36ph), thereby blocking expression of pro-adipogenetic genes. In terms of processing, crotonylation (Kcr) is specifically present in male germ cells and marks testis-specific genes in post-meiotic cells, including X-linked genes that escape sex chromosome inactivation in haploid cells. Crotonylation marks active promoters and enhancers and confers resistance to transcriptional repressors. It is also associated with post-meiotically activated genes on autosomes. Lactylated in macrophages by EP300/P300 by using lactoyl-CoA directly derived from endogenous or exogenous lactate, leading to stimulates gene transcription.

It is found in the nucleus. Its subcellular location is the chromosome. Functionally, core component of nucleosome. Nucleosomes wrap and compact DNA into chromatin, limiting DNA accessibility to the cellular machineries which require DNA as a template. Histones thereby play a central role in transcription regulation, DNA repair, DNA replication and chromosomal stability. DNA accessibility is regulated via a complex set of post-translational modifications of histones, also called histone code, and nucleosome remodeling. Has broad antibacterial activity. May contribute to the formation of the functional antimicrobial barrier of the colonic epithelium, and to the bactericidal activity of amniotic fluid. In Homo sapiens (Human), this protein is Histone H2B type 1-K.